The primary structure comprises 170 residues: Adenine phosphoribosyltransferase (170 aa).

The protein belongs to the purine/pyrimidine phosphoribosyltransferase family. Homodimer.

It is found in the cytoplasm. The enzyme catalyses AMP + diphosphate = 5-phospho-alpha-D-ribose 1-diphosphate + adenine. Its pathway is purine metabolism; AMP biosynthesis via salvage pathway; AMP from adenine: step 1/1. Catalyzes a salvage reaction resulting in the formation of AMP, that is energically less costly than de novo synthesis. This chain is Adenine phosphoribosyltransferase, found in Carboxydothermus hydrogenoformans (strain ATCC BAA-161 / DSM 6008 / Z-2901).